Reading from the N-terminus, the 306-residue chain is MKPTKELLAGILDEVRPLIGQGKVADYIPALAGISATKLGIAVCYNDGEIIQAGDTQERFSIQSISKVMSLTLAMSLYEPEEIWRRVGKEPSGHAFNSMIQLELENGIPRNPFINAGALVVSDLLHSRLAAPQYRMLELVRKLSCNPHLTYDKAVAASEMQHSDRNASIAYLMRSFGNFENEVMPVLTNYFSYCSLNMSCIDLARTFSYLANKGLPLGAKKTIISQTQSKQMNALLATCGLYDGAGEFAYRVGMPGKSGVGGGIVAIVPGEMSITVWSPELDPSGNSLAGTAALELLAERIGRSIF.

Residues Ser64, Asn115, Glu159, Asn166, Tyr190, Tyr242, and Val260 each coordinate substrate.

It belongs to the glutaminase family. In terms of assembly, homotetramer.

The catalysed reaction is L-glutamine + H2O = L-glutamate + NH4(+). In Photobacterium profundum (strain SS9), this protein is Glutaminase.